We begin with the raw amino-acid sequence, 76 residues long: UPF0154 protein Exig_1099 (76 aa).

A helical membrane pass occupies residues 4 to 24 (WIWILIALLCLVAGVALGFYI). The segment at 54–76 (KPSQKKVNQVMRSMSGSMKSPKK) is disordered.

This sequence belongs to the UPF0154 family.

It is found in the cell membrane. The sequence is that of UPF0154 protein Exig_1099 from Exiguobacterium sibiricum (strain DSM 17290 / CCUG 55495 / CIP 109462 / JCM 13490 / 255-15).